The sequence spans 132 residues: Fumarate reductase subunit C (132 aa).

3 consecutive transmembrane segments (helical) span residues 30–50 (ATSVFAVWFCIVLLYGVLCFA), 70–90 (IVVFLNIITLIATLYHTVTYF), and 110–130 (VVRNALWAVTALVSVIALVLV).

Belongs to the FrdC family. As to quaternary structure, part of an enzyme complex containing four subunits: a flavoprotein (FrdA), an iron-sulfur protein (FrdB), and two hydrophobic anchor proteins (FrdC and FrdD).

Its subcellular location is the cell inner membrane. Functionally, anchors the catalytic components of the fumarate reductase complex to the cell membrane, binds quinones. The chain is Fumarate reductase subunit C from Haemophilus influenzae (strain ATCC 51907 / DSM 11121 / KW20 / Rd).